A 270-amino-acid polypeptide reads, in one-letter code: Diaminopimelate epimerase (270 aa).

Substrate contacts are provided by Asn-15, Gln-49, and Asn-66. Cys-75 (proton donor) is an active-site residue. Substrate-binding positions include 76–77, Asn-155, Asn-187, and 204–205; these read GN and ER. Cys-213 serves as the catalytic Proton acceptor. Residue 214-215 participates in substrate binding; that stretch reads GS.

It belongs to the diaminopimelate epimerase family. As to quaternary structure, homodimer.

The protein localises to the cytoplasm. The catalysed reaction is (2S,6S)-2,6-diaminopimelate = meso-2,6-diaminopimelate. It participates in amino-acid biosynthesis; L-lysine biosynthesis via DAP pathway; DL-2,6-diaminopimelate from LL-2,6-diaminopimelate: step 1/1. Functionally, catalyzes the stereoinversion of LL-2,6-diaminopimelate (L,L-DAP) to meso-diaminopimelate (meso-DAP), a precursor of L-lysine and an essential component of the bacterial peptidoglycan. In Rickettsia africae (strain ESF-5), this protein is Diaminopimelate epimerase.